Reading from the N-terminus, the 339-residue chain is Dihydroorotate dehydrogenase (quinone) (339 aa).

Residues 64–68 and T88 each bind FMN; that span reads AGADK. K68 provides a ligand contact to substrate. Position 113 to 117 (113 to 117) interacts with substrate; it reads NRNGF. FMN is bound by residues N141 and N174. Substrate is bound at residue N174. The Nucleophile role is filled by S177. Position 179 (N179) interacts with substrate. Positions 219 and 247 each coordinate FMN. 248–249 lines the substrate pocket; that stretch reads NT. FMN is bound by residues G270, G299, and 320 to 321; that span reads YS.

It belongs to the dihydroorotate dehydrogenase family. Type 2 subfamily. In terms of assembly, monomer. FMN is required as a cofactor.

Its subcellular location is the cell membrane. It carries out the reaction (S)-dihydroorotate + a quinone = orotate + a quinol. It functions in the pathway pyrimidine metabolism; UMP biosynthesis via de novo pathway; orotate from (S)-dihydroorotate (quinone route): step 1/1. In terms of biological role, catalyzes the conversion of dihydroorotate to orotate with quinone as electron acceptor. This is Dihydroorotate dehydrogenase (quinone) from Haemophilus influenzae (strain PittGG).